The chain runs to 329 residues: Acetyl-coenzyme A carboxylase carboxyl transferase subunit alpha (329 aa).

Residues 40–294 enclose the CoA carboxyltransferase C-terminal domain; sequence QLETLAARRR…REALERNLSE (255 aa).

It belongs to the AccA family. As to quaternary structure, acetyl-CoA carboxylase is a heterohexamer composed of biotin carboxyl carrier protein (AccB), biotin carboxylase (AccC) and two subunits each of ACCase subunit alpha (AccA) and ACCase subunit beta (AccD).

The protein localises to the cytoplasm. It carries out the reaction N(6)-carboxybiotinyl-L-lysyl-[protein] + acetyl-CoA = N(6)-biotinyl-L-lysyl-[protein] + malonyl-CoA. The protein operates within lipid metabolism; malonyl-CoA biosynthesis; malonyl-CoA from acetyl-CoA: step 1/1. In terms of biological role, component of the acetyl coenzyme A carboxylase (ACC) complex. First, biotin carboxylase catalyzes the carboxylation of biotin on its carrier protein (BCCP) and then the CO(2) group is transferred by the carboxyltransferase to acetyl-CoA to form malonyl-CoA. The polypeptide is Acetyl-coenzyme A carboxylase carboxyl transferase subunit alpha (Synechococcus sp. (strain CC9311)).